Reading from the N-terminus, the 329-residue chain is Sideroflexin (329 aa).

The next 5 helical transmembrane spans lie at 95-115 (AFLPINVIICAGLILPNASIG), 147-167 (ILEAYASAVGISCSLAVGLGW), 183-203 (LRMMVPFTAVTSAGIANVLIM), 238-258 (FSRAATSFPALLLPPIVMGLF), and 274-294 (LNLAVIAAIFNTSLPAAIALF).

It belongs to the sideroflexin family.

It localises to the mitochondrion membrane. In terms of biological role, mitochondrial amino-acid transporter that mediates transport of serine into mitochondria. This chain is Sideroflexin, found in Dictyostelium discoideum (Social amoeba).